Reading from the N-terminus, the 196-residue chain is MLLSDRDLRAAIESGRVKLDPYDPELVQPSSIDVRLDRYFRVFENHKYPHIDPAVEQPGLTRLVEPEGDEPFILHPGEFVLASTYEMVTLPNDIASRLEGKSSLGRLGLLTHSTAGFIDPGFSGHVTLELSNVSTLPIKLYPGMRIGQLCMFQLSSPAENPYGSEVCGSRYQGQRGPTPSRSYLNFTRTKIREGDQ.

DCTP is bound by residues 101–106, aspartate 119, 127–129, glutamine 148, tyrosine 162, and glutamine 174; these read KSSLGR and TLE. Catalysis depends on glutamate 129, which acts as the Proton donor/acceptor.

The protein belongs to the dCTP deaminase family. Homotrimer.

The enzyme catalyses dCTP + 2 H2O = dUMP + NH4(+) + diphosphate. It participates in pyrimidine metabolism; dUMP biosynthesis; dUMP from dCTP: step 1/1. In terms of biological role, bifunctional enzyme that catalyzes both the deamination of dCTP to dUTP and the hydrolysis of dUTP to dUMP without releasing the toxic dUTP intermediate. The protein is dCTP deaminase, dUMP-forming of Thermobifida fusca (strain YX).